The sequence spans 588 residues: Probable urocanate hydratase (588 aa).

Low complexity predominate over residues Met1–Ala15. Residues Met1 to Gly22 are disordered. Residues Gly62–Gly63, Gln140, Gly188–Gly190, Glu208, Arg213, Asn254–Ala255, Gln275–His279, and Tyr334 contribute to the NAD(+) site. Residue Cys431 is part of the active site. Gly520 lines the NAD(+) pocket.

This sequence belongs to the urocanase family. The cofactor is NAD(+).

It localises to the cytoplasm. The enzyme catalyses 4-imidazolone-5-propanoate = trans-urocanate + H2O. The protein operates within amino-acid degradation; L-histidine degradation into L-glutamate; N-formimidoyl-L-glutamate from L-histidine: step 2/3. Its function is as follows. Catalyzes the conversion of urocanate to 4-imidazolone-5-propionate. The protein is Probable urocanate hydratase of Halobacterium salinarum (strain ATCC 29341 / DSM 671 / R1).